The chain runs to 208 residues: Ribosomal RNA small subunit methyltransferase G (208 aa).

S-adenosyl-L-methionine-binding positions include glycine 76, leucine 81, 127–128 (VE), and arginine 142.

The protein belongs to the methyltransferase superfamily. RNA methyltransferase RsmG family.

The protein localises to the cytoplasm. It carries out the reaction guanosine(527) in 16S rRNA + S-adenosyl-L-methionine = N(7)-methylguanosine(527) in 16S rRNA + S-adenosyl-L-homocysteine. In terms of biological role, specifically methylates the N7 position of guanine in position 527 of 16S rRNA. The sequence is that of Ribosomal RNA small subunit methyltransferase G from Legionella pneumophila subsp. pneumophila (strain Philadelphia 1 / ATCC 33152 / DSM 7513).